Here is a 187-residue protein sequence, read N- to C-terminus: KS71A fimbrillin (187 aa).

An N-terminal signal peptide occupies residues 1-21 (MIKSVIAGAVAMAVVSFGANA). The cysteines at positions 43 and 82 are disulfide-linked.

It belongs to the fimbrial protein family.

Its subcellular location is the fimbrium. Its function is as follows. Fimbriae (also called pili), polar filaments radiating from the surface of the bacterium to a length of 0.5-1.5 micrometers and numbering 100-300 per cell, enable bacteria to colonize the epithelium of specific host organs. This chain is KS71A fimbrillin (KS71A), found in Escherichia coli.